Consider the following 207-residue polypeptide: Succinyl-CoA:3-ketoacid coenzyme A transferase subunit B (207 aa).

The active site involves Glu-43.

Belongs to the 3-oxoacid CoA-transferase subunit B family. In terms of assembly, heterodimer of a subunit A and a subunit B.

It carries out the reaction a 3-oxo acid + succinyl-CoA = a 3-oxoacyl-CoA + succinate. The chain is Succinyl-CoA:3-ketoacid coenzyme A transferase subunit B (scoB) from Helicobacter pylori (strain ATCC 700392 / 26695) (Campylobacter pylori).